Here is a 429-residue protein sequence, read N- to C-terminus: tRNA (guanine(9)-N1)-methyltransferase (429 aa).

The region spanning 131 to 379 (KERKEAQRRI…AVIPIRKYAP (249 aa)) is the SAM-dependent MTase TRM10-type domain. Residues 285–286 (LS), Gly305, 309–313 (DRNRH), Cys317, Leu331, and 344–346 (KAL) contribute to the S-adenosyl-L-methionine site. Catalysis depends on Asp309, which acts as the Proton acceptor. The tract at residues 383–429 (AKRAKTETKRNEKVEEEVECTSAEGEEDIGVIEESAEVDPEDVFSNQ) is disordered. Positions 386–395 (AKTETKRNEK) are enriched in basic and acidic residues. Acidic residues predominate over residues 396–429 (VEEEVECTSAEGEEDIGVIEESAEVDPEDVFSNQ).

This sequence belongs to the class IV-like SAM-binding methyltransferase superfamily. TRM10 family. As to quaternary structure, monomer.

It localises to the cytoplasm. It is found in the nucleus. It carries out the reaction guanosine(9) in tRNA + S-adenosyl-L-methionine = N(1)-methylguanosine(9) in tRNA + S-adenosyl-L-homocysteine + H(+). Functionally, S-adenosyl-L-methionine-dependent guanine N(1)-methyltransferase that catalyzes the formation of N(1)-methylguanine at position 9 (m1G9) in cytoplasmic tRNA. The sequence is that of tRNA (guanine(9)-N1)-methyltransferase from Cryptococcus neoformans var. neoformans serotype D (strain B-3501A) (Filobasidiella neoformans).